The primary structure comprises 446 residues: Probable glycine dehydrogenase (decarboxylating) subunit 1 (446 aa).

Belongs to the GcvP family. N-terminal subunit subfamily. In terms of assembly, the glycine cleavage system is composed of four proteins: P, T, L and H. In this organism, the P 'protein' is a heterodimer of two subunits.

It carries out the reaction N(6)-[(R)-lipoyl]-L-lysyl-[glycine-cleavage complex H protein] + glycine + H(+) = N(6)-[(R)-S(8)-aminomethyldihydrolipoyl]-L-lysyl-[glycine-cleavage complex H protein] + CO2. Its function is as follows. The glycine cleavage system catalyzes the degradation of glycine. The P protein binds the alpha-amino group of glycine through its pyridoxal phosphate cofactor; CO(2) is released and the remaining methylamine moiety is then transferred to the lipoamide cofactor of the H protein. The polypeptide is Probable glycine dehydrogenase (decarboxylating) subunit 1 (Xanthobacter autotrophicus (strain ATCC BAA-1158 / Py2)).